A 343-amino-acid chain; its full sequence is Heat-inducible transcription repressor HrcA (343 aa).

It belongs to the HrcA family.

Its function is as follows. Negative regulator of class I heat shock genes (grpE-dnaK-dnaJ and groELS operons). Prevents heat-shock induction of these operons. The polypeptide is Heat-inducible transcription repressor HrcA (Mycoplasma genitalium (strain ATCC 33530 / DSM 19775 / NCTC 10195 / G37) (Mycoplasmoides genitalium)).